Consider the following 508-residue polypeptide: Steroid 17-alpha-hydroxylase/17,20 lyase (508 aa).

Position 202 (Asn202) interacts with substrate. Cys442 contributes to the heme binding site.

This sequence belongs to the cytochrome P450 family. Heme is required as a cofactor.

The protein resides in the endoplasmic reticulum membrane. It is found in the microsome membrane. It carries out the reaction a C21-steroid + reduced [NADPH--hemoprotein reductase] + O2 = a 17alpha-hydroxy-C21-steroid + oxidized [NADPH--hemoprotein reductase] + H2O + H(+). The enzyme catalyses progesterone + reduced [NADPH--hemoprotein reductase] + O2 = 17alpha-hydroxyprogesterone + oxidized [NADPH--hemoprotein reductase] + H2O + H(+). It catalyses the reaction pregnenolone + reduced [NADPH--hemoprotein reductase] + O2 = 17alpha-hydroxypregnenolone + oxidized [NADPH--hemoprotein reductase] + H2O + H(+). The catalysed reaction is 17alpha-hydroxyprogesterone + reduced [NADPH--hemoprotein reductase] + O2 = androst-4-ene-3,17-dione + acetate + oxidized [NADPH--hemoprotein reductase] + H2O + 2 H(+). It carries out the reaction 17alpha-hydroxyprogesterone + reduced [NADPH--hemoprotein reductase] + O2 = 16alpha,17alpha-dihydroxyprogesterone + oxidized [NADPH--hemoprotein reductase] + H2O + H(+). The enzyme catalyses 16alpha,17alpha-dihydroxyprogesterone + reduced [NADPH--hemoprotein reductase] + O2 = 6beta,16alpha,17alpha-trihydroxyprogesterone + oxidized [NADPH--hemoprotein reductase] + H2O + H(+). It catalyses the reaction 17alpha-hydroxypregnenolone + reduced [NADPH--hemoprotein reductase] + O2 = 3beta-hydroxyandrost-5-en-17-one + acetate + oxidized [NADPH--hemoprotein reductase] + H2O + 2 H(+). The catalysed reaction is 16alpha,17alpha-dihydroxypregnenolone + reduced [NADPH--hemoprotein reductase] + O2 = 3beta,16alpha-dihydroxy-androst-5-en-17-one + acetate + oxidized [NADPH--hemoprotein reductase] + H2O + 2 H(+). It carries out the reaction 3beta-hydroxyandrost-5-en-17-one + reduced [NADPH--hemoprotein reductase] + O2 = 3beta,16alpha-dihydroxy-androst-5-en-17-one + oxidized [NADPH--hemoprotein reductase] + H2O + H(+). The enzyme catalyses androst-4-ene-3,17-dione + reduced [NADPH--hemoprotein reductase] + O2 = 16alpha-hydroxyandrost-4-ene-3,17-dione + oxidized [NADPH--hemoprotein reductase] + H2O + H(+). The protein operates within steroid hormone biosynthesis. Its pathway is steroid biosynthesis; glucocorticoid biosynthesis. With respect to regulation, regulated predominantly by intracellular cAMP levels. The 17,20-lyase activity is stimulated by cytochrome b5, which acts as an allosteric effector increasing the Vmax of the lyase activity. In terms of biological role, a cytochrome P450 monooxygenase involved in corticoid and androgen biosynthesis. Catalyzes 17-alpha hydroxylation of C21 steroids, which is common for both pathways. A second oxidative step, required only for androgen synthesis, involves an acyl-carbon cleavage. The 17-alpha hydroxy intermediates, as part of adrenal glucocorticoids biosynthesis pathway, are precursors of cortisol. Hydroxylates steroid hormones, pregnenolone and progesterone to form 17-alpha hydroxy metabolites, followed by the cleavage of the C17-C20 bond to form C19 steroids, dehydroepiandrosterone (DHEA) and androstenedione. Has 16-alpha hydroxylase activity. Catalyzes 16-alpha hydroxylation of 17-alpha hydroxy pregnenolone, followed by the cleavage of the C17-C20 bond to form 16-alpha-hydroxy DHEA. Also 16-alpha hydroxylates androgens, relevant for estriol synthesis. Mechanistically, uses molecular oxygen inserting one oxygen atom into a substrate, and reducing the second into a water molecule, with two electrons provided by NADPH via cytochrome P450 reductase (CPR; NADPH-ferrihemoprotein reductase). The chain is Steroid 17-alpha-hydroxylase/17,20 lyase (CYP17A1) from Macaca fascicularis (Crab-eating macaque).